A 371-amino-acid chain; its full sequence is uncharacterized protein (371 aa).

H76 contacts Zn(2+). The active site involves D78. Residue D106 participates in Zn(2+) binding. The active-site Proton acceptor is E139. Residues E140, D163, and H344 each coordinate Zn(2+).

Belongs to the peptidase M20A family. It depends on Zn(2+) as a cofactor.

Functionally, could be a peptidase. This is an uncharacterized protein from Bacillus subtilis (strain 168).